Consider the following 332-residue polypeptide: MRLAIDAMGGDHAPEEIIKGSLEALKHFQDIEIVLIGKEEVLRGLQRKEKRLKLVYASEVIENDEAPVTAVRKKKDSSMIVGLELLKKEEVDAFLSAGNTGALMAGALLTLGRIKGIDRPALAPILPTLNGATVLLDAGSNTNCDAQNLVQFAVMGHVYAQKMFEIERPRVGLFNIGAEEEKGNEVVKKAFEELKKSKLNFIGNVEGRDIPYGVCEVVVCDGFVGNAILKSMEGIASVISQLLKEELTRNIFTKLGALLIMGGLKRITKKMDYTEYGGAPLLGIKKPVIKAHGNSKAKAIFNAIKQAKNFVDNDVLNHIKEEIESMGDELSV.

This sequence belongs to the PlsX family. In terms of assembly, homodimer. Probably interacts with PlsY.

The protein resides in the cytoplasm. The enzyme catalyses a fatty acyl-[ACP] + phosphate = an acyl phosphate + holo-[ACP]. Its pathway is lipid metabolism; phospholipid metabolism. Catalyzes the reversible formation of acyl-phosphate (acyl-PO(4)) from acyl-[acyl-carrier-protein] (acyl-ACP). This enzyme utilizes acyl-ACP as fatty acyl donor, but not acyl-CoA. This chain is Phosphate acyltransferase, found in Thermoanaerobacter pseudethanolicus (strain ATCC 33223 / 39E) (Clostridium thermohydrosulfuricum).